The sequence spans 444 residues: Multidrug resistance protein MdtA (444 aa).

Residues 1–20 (MKSQSKRTSRLFVFVGVVVA) form the signal peptide. The span at 37 to 52 (NNTSGAQQSARGQDTS) shows a compositional bias: polar residues. Disordered regions lie at residues 37–60 (NNTSGAQQSARGQDTSHGGRRNTP) and 398–444 (TPRS…AEKS). Low complexity predominate over residues 406–419 (ANPASAEKAAAEAE). Positions 435–444 (ARSTTAAEKS) are enriched in polar residues.

Belongs to the membrane fusion protein (MFP) (TC 8.A.1) family. In terms of assembly, part of a tripartite efflux system composed of MdtA, MdtB and MdtC.

It localises to the cell inner membrane. This is Multidrug resistance protein MdtA from Yersinia pestis bv. Antiqua (strain Antiqua).